A 223-amino-acid chain; its full sequence is Cytidylate kinase (223 aa).

Residue 11–19 (GPAGVGKST) participates in ATP binding.

This sequence belongs to the cytidylate kinase family. Type 1 subfamily.

The protein localises to the cytoplasm. It carries out the reaction CMP + ATP = CDP + ADP. It catalyses the reaction dCMP + ATP = dCDP + ADP. This chain is Cytidylate kinase, found in Maridesulfovibrio salexigens (strain ATCC 14822 / DSM 2638 / NCIMB 8403 / VKM B-1763) (Desulfovibrio salexigens).